The primary structure comprises 61 residues: Small ribosomal subunit protein uS14 (61 aa).

Residues C24, C27, C40, and C43 each contribute to the Zn(2+) site.

The protein belongs to the universal ribosomal protein uS14 family. Zinc-binding uS14 subfamily. Part of the 30S ribosomal subunit. Contacts proteins S3 and S10. The cofactor is Zn(2+).

Functionally, binds 16S rRNA, required for the assembly of 30S particles and may also be responsible for determining the conformation of the 16S rRNA at the A site. This Staphylococcus aureus (strain USA300 / TCH1516) protein is Small ribosomal subunit protein uS14.